The primary structure comprises 254 residues: Long form salivary protein D7LC (254 aa).

The signal sequence occupies residues 1–19 (MNAVITSLLFLSLVGLGYS). Cystine bridges form between cysteine 36-cysteine 66 and cysteine 62-cysteine 112. Tryptophan 49 is a binding site for thromboxane A2. Tryptophan 52 serves as a coordination point for leukotriene C4. Tyrosine 63 provides a ligand contact to thromboxane A2. The leukotriene C4 site is built by glycine 136 and lysine 154. Lysine 154 is a thromboxane A2 binding site. 3 disulfides stabilise this stretch: cysteine 162–cysteine 178, cysteine 174–cysteine 221, and cysteine 211–cysteine 230.

It belongs to the PBP/GOBP family.

It is found in the secreted. In terms of biological role, modulates blood feeding of female sandflies on vertebrate species by binding and sequestering different mediators involved in the host response. Binds leukotriene C4, leukotriene D4, leukotriene E4 and U-46619, a stable analog of thromboxane A2. Does not bind histamine or serotonin. Inhibits platelet aggregation induced by low concentrations of collagen in thromboxane A2-dependent manner. The polypeptide is Long form salivary protein D7LC (Phlebotomus papatasi (Sandfly)).